Consider the following 219-residue polypeptide: Uracil-DNA glycosylase (219 aa).

The active-site Proton acceptor is the Asp61.

It belongs to the uracil-DNA glycosylase (UDG) superfamily. UNG family.

The protein resides in the cytoplasm. The enzyme catalyses Hydrolyzes single-stranded DNA or mismatched double-stranded DNA and polynucleotides, releasing free uracil.. Excises uracil residues from the DNA which can arise as a result of misincorporation of dUMP residues by DNA polymerase or due to deamination of cytosine. The chain is Uracil-DNA glycosylase from Neisseria meningitidis serogroup A / serotype 4A (strain DSM 15465 / Z2491).